Consider the following 276-residue polypeptide: Thiazole synthase (276 aa).

Lysine 117 acts as the Schiff-base intermediate with DXP in catalysis. Residues glycine 178, 204–205, and 226–227 contribute to the 1-deoxy-D-xylulose 5-phosphate site; these read AG and NT.

This sequence belongs to the ThiG family. Homotetramer. Forms heterodimers with either ThiH or ThiS.

The protein resides in the plastid. It is found in the chloroplast. It catalyses the reaction [ThiS sulfur-carrier protein]-C-terminal-Gly-aminoethanethioate + 2-iminoacetate + 1-deoxy-D-xylulose 5-phosphate = [ThiS sulfur-carrier protein]-C-terminal Gly-Gly + 2-[(2R,5Z)-2-carboxy-4-methylthiazol-5(2H)-ylidene]ethyl phosphate + 2 H2O + H(+). It participates in cofactor biosynthesis; thiamine diphosphate biosynthesis. Functionally, catalyzes the rearrangement of 1-deoxy-D-xylulose 5-phosphate (DXP) to produce the thiazole phosphate moiety of thiamine. Sulfur is provided by the thiocarboxylate moiety of the carrier protein ThiS. In vitro, sulfur can be provided by H(2)S. The polypeptide is Thiazole synthase (Gracilaria tenuistipitata var. liui (Red alga)).